The primary structure comprises 517 residues: Bifunctional purine biosynthesis protein PurH (517 aa).

One can recognise an MGS-like domain in the interval 1 to 145 (MSPLALVSVS…KNHADVAVLV (145 aa)).

The protein belongs to the PurH family.

The enzyme catalyses (6R)-10-formyltetrahydrofolate + 5-amino-1-(5-phospho-beta-D-ribosyl)imidazole-4-carboxamide = 5-formamido-1-(5-phospho-D-ribosyl)imidazole-4-carboxamide + (6S)-5,6,7,8-tetrahydrofolate. It catalyses the reaction IMP + H2O = 5-formamido-1-(5-phospho-D-ribosyl)imidazole-4-carboxamide. The protein operates within purine metabolism; IMP biosynthesis via de novo pathway; 5-formamido-1-(5-phospho-D-ribosyl)imidazole-4-carboxamide from 5-amino-1-(5-phospho-D-ribosyl)imidazole-4-carboxamide (10-formyl THF route): step 1/1. It functions in the pathway purine metabolism; IMP biosynthesis via de novo pathway; IMP from 5-formamido-1-(5-phospho-D-ribosyl)imidazole-4-carboxamide: step 1/1. The polypeptide is Bifunctional purine biosynthesis protein PurH (Prochlorococcus marinus (strain MIT 9515)).